The following is a 294-amino-acid chain: Non-selective voltage-gated ion channel VDAC2 (294 aa).

Position 2 is an N-acetylalanine (Ala-2). Positions 23 and 31 each coordinate ATP. Lys-31 is modified (N6-acetyllysine; alternate). Lys-31 carries the post-translational modification N6-succinyllysine; alternate. A Glycyl lysine isopeptide (Lys-Gly) (interchain with G-Cter in ubiquitin); alternate cross-link involves residue Lys-31. 2 consecutive transmembrane segments (beta stranded) span residues 37 to 46 (LVKLDVKTKS) and 50 to 58 (VEFSTSGSS). Glycyl lysine isopeptide (Lys-Gly) (interchain with G-Cter in ubiquitin) cross-links involve residues Lys-64 and Lys-72. A beta stranded membrane pass occupies residues 65–75 (VTGTLETKYKW). Tyr-78 carries the post-translational modification Phosphotyrosine. 3 consecutive transmembrane segments (beta stranded) span residues 80-87 (LTFTEKWN), 91-100 (TLGTEIAIED), and 106-115 (LKLTFDTTFS). Thr-118 is modified (phosphothreonine). The residue at position 120 (Lys-120) is an N6-acetyllysine; alternate. Lys-120 is covalently cross-linked (Glycyl lysine isopeptide (Lys-Gly) (interchain with G-Cter in ubiquitin); alternate). Glycyl lysine isopeptide (Lys-Gly) (interchain with G-Cter in ubiquitin) cross-links involve residues Lys-121 and Lys-124. Beta stranded transmembrane passes span 122-131 (SGKIKSSYKR), 134-141 (INLGCDVD), 148-156 (AIHGSAVFG), and 161-169 (LAGYQMTFD). Lys-172 participates in a covalent cross-link: Glycyl lysine isopeptide (Lys-Gly) (interchain with G-Cter in ubiquitin). The next 6 membrane-spanning stretches (beta stranded) occupy residues 174-186 (KLTR…GYRT), 189-196 (FQLHTNVN), 200-209 (EFGGSIYQKV), 213-222 (LDTSVNLAWT), 229-238 (RFGIAAKYQL), and 242-249 (ASISAKVN). At Ser-251 the chain carries Phosphoserine. Residues 253-255 (LIG) and 271-275 (SALVD) contribute to the NAD(+) site. 2 beta stranded membrane-spanning segments follow: residues 253-262 (LIGVGYTQTL) and 265-274 (GVKLTLSALV). Lys-277 carries the N6-acetyllysine; alternate modification. Residue Lys-277 forms a Glycyl lysine isopeptide (Lys-Gly) (interchain with G-Cter in ubiquitin); alternate linkage. The chain crosses the membrane as a beta stranded span at residues 284-293 (HKVGLALELE). Residue Lys-285 forms a Glycyl lysine isopeptide (Lys-Gly) (interchain with G-Cter in ubiquitin) linkage.

This sequence belongs to the eukaryotic mitochondrial porin family. In terms of assembly, monomer, homodimer and higher order oligomers; formation of higher order structures is necessary for scramblase activity. Interacts with ARMC12 in a TBC1D21-dependent manner. Interacts with KLC3. Interacts with SPATA33. Interacts with PPP3CC in a SPATA33-dependent manner. In terms of processing, ubiquitinated by PRKN during mitophagy, leading to its degradation and enhancement of mitophagy. Deubiquitinated by USP30. Expressed in erythrocytes (at protein level). Expressed in all tissues examined.

The protein localises to the mitochondrion outer membrane. It is found in the membrane. The enzyme catalyses chloride(in) = chloride(out). The catalysed reaction is K(+)(in) = K(+)(out). It carries out the reaction a 1,2-diacyl-sn-glycero-3-phospho-L-serine(in) = a 1,2-diacyl-sn-glycero-3-phospho-L-serine(out). It catalyses the reaction a 1,2-diacyl-sn-glycero-3-phosphocholine(in) = a 1,2-diacyl-sn-glycero-3-phosphocholine(out). The enzyme catalyses a 1,2-diacyl-sn-glycero-3-phospho-(1D-myo-inositol)(in) = a 1,2-diacyl-sn-glycero-3-phospho-(1D-myo-inositol)(out). Its function is as follows. Non-selective voltage-gated ion channel that mediates the transport of anions and cations through the mitochondrion outer membrane and plasma membrane. The channel adopts an open conformation at zero mV and a closed conformation at both positive and negative potentials. There are two populations of channels; the main that functions in a lower open-state conductance with lower ion selectivity, that switch, in a voltage-dependent manner, from the open to a low-conducting 'closed' state and the other that has a normal ion selectivity in the typical high conductance, 'open' state. Binds various lipids, including the sphingolipid ceramide, the phospholipid phosphatidylcholine, and the sterols cholesterol and oxysterol. Binding of ceramide promotes the mitochondrial outer membrane permeabilization (MOMP) apoptotic pathway. Catalyzes the scrambling of phospholipids across the outer mitochondrial membrane; the mechanism is unrelated to channel activity and is capable of translocating both anionic and zwitterionic phospholipids. The sequence is that of Non-selective voltage-gated ion channel VDAC2 from Homo sapiens (Human).